The following is a 370-amino-acid chain: Keratin-associated protein 10-7 (370 aa).

Residues 36-363 (DCPESCCEPP…CSRPACCGPT (328 aa)) are 30 X 5 AA repeats of C-C-X(3). A run of 30 repeats spans residues 41 to 45 (CCEPP), 46 to 50 (CCAPA), 67 to 71 (CCRVT), 89 to 93 (CCQQS), 99 to 103 (CCASS), 109 to 113 (CCVPV), 114 to 118 (CCKTV), 119 to 123 (CCKPV), 135 to 139 (CCQQS), 145 to 149 (CCTSS), 155 to 159 (CCVPI), 160 to 164 (CCKPV), 172 to 176 (CCQQS), 186 to 190 (CCQAV), 208 to 212 (CCQQS), 218 to 222 (CCTSS), 228 to 232 (CCVPV), 233 to 237 (CCKPV), 238 to 242 (CCVPT), 250 to 254 (CCQPA), 255 to 259 (CCTSS), 265 to 269 (CCVPV), 270 to 274 (CCKPV), 275 to 279 (CCVPV), 287 to 291 (CCQQS), 297 to 301 (CCTTS), 302 to 306 (CCRPS), 321 to 325 (CCVPV), 339 to 343 (CCRPA), and 359 to 363 (CCGPT).

This sequence belongs to the KRTAP type 10 family. As to quaternary structure, interacts with hair keratins. In terms of tissue distribution, restricted to a narrow region of the hair fiber cuticle, lying approximately 20 cell layers above the apex of the dermal papilla of the hair root; not detected in any other tissues.

Its function is as follows. In the hair cortex, hair keratin intermediate filaments are embedded in an interfilamentous matrix, consisting of hair keratin-associated proteins (KRTAP), which are essential for the formation of a rigid and resistant hair shaft through their extensive disulfide bond cross-linking with abundant cysteine residues of hair keratins. The matrix proteins include the high-sulfur and high-glycine-tyrosine keratins. This is Keratin-associated protein 10-7 (KRTAP10-7) from Homo sapiens (Human).